A 222-amino-acid polypeptide reads, in one-letter code: Prolactin-3B1 (222 aa).

Residues 1-31 form the signal peptide; sequence MKLSLSQPCSFSGALLLLAVSNLLVWEKVTS. 2 disulfides stabilise this stretch: Cys-82-Cys-197 and Cys-214-Cys-222.

It belongs to the somatotropin/prolactin family.

It localises to the secreted. This Mus musculus (Mouse) protein is Prolactin-3B1 (Prl3b1).